A 511-amino-acid polypeptide reads, in one-letter code: Bifunctional purine biosynthesis protein PurH (511 aa).

Residues 1–147 (MIQIKRALIS…KNYKHTLVLT (147 aa)) enclose the MGS-like domain.

The protein belongs to the PurH family.

It catalyses the reaction (6R)-10-formyltetrahydrofolate + 5-amino-1-(5-phospho-beta-D-ribosyl)imidazole-4-carboxamide = 5-formamido-1-(5-phospho-D-ribosyl)imidazole-4-carboxamide + (6S)-5,6,7,8-tetrahydrofolate. The enzyme catalyses IMP + H2O = 5-formamido-1-(5-phospho-D-ribosyl)imidazole-4-carboxamide. It participates in purine metabolism; IMP biosynthesis via de novo pathway; 5-formamido-1-(5-phospho-D-ribosyl)imidazole-4-carboxamide from 5-amino-1-(5-phospho-D-ribosyl)imidazole-4-carboxamide (10-formyl THF route): step 1/1. The protein operates within purine metabolism; IMP biosynthesis via de novo pathway; IMP from 5-formamido-1-(5-phospho-D-ribosyl)imidazole-4-carboxamide: step 1/1. The polypeptide is Bifunctional purine biosynthesis protein PurH (Leptospira borgpetersenii serovar Hardjo-bovis (strain JB197)).